A 185-amino-acid polypeptide reads, in one-letter code: MTNPQDSKAIWHGTTVLAVRKNGKLVMLSDGQVSMGQTIMKGNARKVRRIAGGQILAGFAGATADAFTLFERLEAKLERFPDQLQRAAVELAKDWRTEKYLQKLEALLIVADKHSTLVITGAGDVLEPEHHVVSIGSGGNYALAAARGLYDYEEDAETIGRKAMQIAADICVYTNGHFSVETLEI.

T14 is an active-site residue. Residues A168, C171, and T174 each coordinate Na(+).

This sequence belongs to the peptidase T1B family. HslV subfamily. In terms of assembly, a double ring-shaped homohexamer of HslV is capped on each side by a ring-shaped HslU homohexamer. The assembly of the HslU/HslV complex is dependent on binding of ATP.

The protein localises to the cytoplasm. It carries out the reaction ATP-dependent cleavage of peptide bonds with broad specificity.. Its activity is regulated as follows. Allosterically activated by HslU binding. In terms of biological role, protease subunit of a proteasome-like degradation complex believed to be a general protein degrading machinery. The protein is ATP-dependent protease subunit HslV of Hyphomonas neptunium (strain ATCC 15444).